An 888-amino-acid polypeptide reads, in one-letter code: Pyruvate dehydrogenase E1 component (888 aa).

Homodimer. Part of the PDH complex, consisting of multiple copies of pyruvate dehydrogenase (E1), dihydrolipoamide acetyltransferase (E2) and lipoamide dehydrogenase (E3). The cofactor is thiamine diphosphate.

The catalysed reaction is N(6)-[(R)-lipoyl]-L-lysyl-[protein] + pyruvate + H(+) = N(6)-[(R)-S(8)-acetyldihydrolipoyl]-L-lysyl-[protein] + CO2. In terms of biological role, component of the pyruvate dehydrogenase (PDH) complex, that catalyzes the overall conversion of pyruvate to acetyl-CoA and CO(2). This Buchnera aphidicola subsp. Schizaphis graminum (strain Sg) protein is Pyruvate dehydrogenase E1 component (aceE).